Reading from the N-terminus, the 328-residue chain is tRNA dimethylallyltransferase (328 aa).

Residue 10 to 17 (GPTASGKT) coordinates ATP. 12–17 (TASGKT) provides a ligand contact to substrate.

The protein belongs to the IPP transferase family. In terms of assembly, monomer. Requires Mg(2+) as cofactor.

The enzyme catalyses adenosine(37) in tRNA + dimethylallyl diphosphate = N(6)-dimethylallyladenosine(37) in tRNA + diphosphate. Functionally, catalyzes the transfer of a dimethylallyl group onto the adenine at position 37 in tRNAs that read codons beginning with uridine, leading to the formation of N6-(dimethylallyl)adenosine (i(6)A). This is tRNA dimethylallyltransferase from Bifidobacterium longum subsp. infantis (strain ATCC 15697 / DSM 20088 / JCM 1222 / NCTC 11817 / S12).